Here is a 1023-residue protein sequence, read N- to C-terminus: 2-oxoglutarate dehydrogenase complex component E1 (1023 aa).

The transit peptide at 1-40 directs the protein to the mitochondrion; sequence MFHLRTCAAKLRPLTASQTVKTFSQNRPAAARTFQQIRCY. Lys-74 bears the N6-succinyllysine mark. Ser-100 carries the phosphoserine modification. Positions 143, 156, and 158 each coordinate Ca(2+). Arg-312 provides a ligand contact to thiamine diphosphate. At Lys-401 the chain carries N6-acetyllysine. The thiamine diphosphate site is built by Asp-411, Asn-444, and Ile-446. Residues Asp-411, Asn-444, and Ile-446 each coordinate Mg(2+). Lys-534 is covalently cross-linked (Glycyl lysine isopeptide (Lys-Gly) (interchain with G-Cter in ubiquitin)). The residue at position 564 (Lys-564) is an N6-succinyllysine. Gln-676 provides a ligand contact to thiamine diphosphate. Residue Lys-970 is modified to N6-acetyllysine.

The protein belongs to the alpha-ketoglutarate dehydrogenase family. Homodimer. The 2-oxoglutarate dehydrogenase complex is composed of OGDH (2-oxoglutarate dehydrogenase; E1), DLST (dihydrolipoamide succinyltransferase; E2), DLD (dihydrolipoamide dehydrogenase; E3), and the assembly factor KGD4. It contains multiple copies of the three enzymatic components (E1, E2 and E3). In the nucleus, the 2-oxoglutarate dehydrogenase complex associates with KAT2A. Interacts with ABHD11; this interaction maintains the functional lipoylation of the 2-oxoglutarate dehydrogenase complex. It depends on thiamine diphosphate as a cofactor. Mg(2+) serves as cofactor.

It is found in the mitochondrion. The protein resides in the nucleus. It catalyses the reaction N(6)-[(R)-lipoyl]-L-lysyl-[protein] + 2-oxoglutarate + H(+) = N(6)-[(R)-S(8)-succinyldihydrolipoyl]-L-lysyl-[protein] + CO2. Calcium ions and ADP stimulate, whereas ATP and NADH reduce catalytic activity. Functionally, 2-oxoglutarate dehydrogenase (E1o) component of the 2-oxoglutarate dehydrogenase complex (OGDHC). Participates in the first step, rate limiting for the overall conversion of 2-oxoglutarate to succinyl-CoA and CO(2) catalyzed by the whole OGDHC. Catalyzes the irreversible decarboxylation of 2-oxoglutarate (alpha-ketoglutarate) via the thiamine diphosphate (ThDP) cofactor and subsequent transfer of the decarboxylated acyl intermediate on an oxidized dihydrolipoyl group that is covalently amidated to the E2 enzyme (dihydrolipoyllysine-residue succinyltransferase or DLST). Plays a key role in the Krebs (citric acid) cycle, which is a common pathway for oxidation of fuel molecules, including carbohydrates, fatty acids, and amino acids. Can catalyze the decarboxylation of 2-oxoadipate in vitro, but at a much lower rate than 2-oxoglutarate. Mainly active in the mitochondrion. A fraction of the 2-oxoglutarate dehydrogenase complex also localizes in the nucleus and is required for lysine succinylation of histones: associates with KAT2A on chromatin and provides succinyl-CoA to histone succinyltransferase KAT2A. The polypeptide is 2-oxoglutarate dehydrogenase complex component E1 (Homo sapiens (Human)).